A 222-amino-acid chain; its full sequence is Phosphoribosylformylglycinamidine synthase subunit PurQ (222 aa).

The region spanning 3–222 (SAVVLLPGLN…LFEGALGIAA (220 aa)) is the Glutamine amidotransferase type-1 domain. Residue Cys86 is the Nucleophile of the active site. Residues His196 and Glu198 contribute to the active site.

In terms of assembly, part of the FGAM synthase complex composed of 1 PurL, 1 PurQ and 2 PurS subunits.

It localises to the cytoplasm. It catalyses the reaction N(2)-formyl-N(1)-(5-phospho-beta-D-ribosyl)glycinamide + L-glutamine + ATP + H2O = 2-formamido-N(1)-(5-O-phospho-beta-D-ribosyl)acetamidine + L-glutamate + ADP + phosphate + H(+). The enzyme catalyses L-glutamine + H2O = L-glutamate + NH4(+). Its pathway is purine metabolism; IMP biosynthesis via de novo pathway; 5-amino-1-(5-phospho-D-ribosyl)imidazole from N(2)-formyl-N(1)-(5-phospho-D-ribosyl)glycinamide: step 1/2. Its function is as follows. Part of the phosphoribosylformylglycinamidine synthase complex involved in the purines biosynthetic pathway. Catalyzes the ATP-dependent conversion of formylglycinamide ribonucleotide (FGAR) and glutamine to yield formylglycinamidine ribonucleotide (FGAM) and glutamate. The FGAM synthase complex is composed of three subunits. PurQ produces an ammonia molecule by converting glutamine to glutamate. PurL transfers the ammonia molecule to FGAR to form FGAM in an ATP-dependent manner. PurS interacts with PurQ and PurL and is thought to assist in the transfer of the ammonia molecule from PurQ to PurL. The protein is Phosphoribosylformylglycinamidine synthase subunit PurQ of Mesorhizobium japonicum (strain LMG 29417 / CECT 9101 / MAFF 303099) (Mesorhizobium loti (strain MAFF 303099)).